Reading from the N-terminus, the 157-residue chain is uncharacterized protein (157 aa).

The region spanning 9–154 is the N-acetyltransferase domain; it reads LLINYKTLDE…ETNLNAVTNE (146 aa).

This is an uncharacterized protein from Bacillus cereus (strain B4264).